The primary structure comprises 934 residues: Palmitoyltransferase ZDHHC8 (934 aa).

Residues 1 to 9 (MPKCDVKTR) are Cytoplasmic-facing. A helical membrane pass occupies residues 10–30 (YIPATFAWIVLLLTTFLFFFY). Residues 31–47 (PCQFYVKSHPWVLAYQG) lie on the Extracellular side of the membrane. The chain crosses the membrane as a helical span at residues 48-68 (VITFFVLANFTLATFMDPGII). Residues 69 to 142 (PKASPDEDCE…NNCIGRRNYR (74 aa)) are Cytoplasmic-facing. The region spanning 99-149 (KWCVTCKFYRPPRCSHCSVCNHCIETFDHHCPWVNNCIGRRNYRFFFFFLV) is the DHHC domain. The active-site S-palmitoyl cysteine intermediate is cysteine 129. The helical transmembrane segment at 143 to 163 (FFFFFLVSLSIHMLSIFSLCL) threads the bilayer. Residues 164-177 (VYVLKIMPNIKDTA) are Extracellular-facing. A helical transmembrane segment spans residues 178–198 (PIVAIILMGLVTILAIPIFGL). The Cytoplasmic portion of the chain corresponds to 199–934 (TGFHMVLVSR…IYDMNYEISV (736 aa)). 6 disordered regions span residues 336 to 440 (NGYN…GYTS), 506 to 525 (MASPVRRSNPGTPTQPRRPD), 669 to 705 (QRGVYMWKDTSPGFTNNAGQQQQQQQQAQQVVSSGIG), 751 to 780 (QQQQQQQQAAAAAAASYHRSNPTSPTTMPQ), 835 to 862 (PNPMGNQGGGNLQTQPSPQIKRKQTPTR), and 881 to 934 (LEQQ…EISV). Composition is skewed to polar residues over residues 337-349 (GYNQRSGSTTLYS) and 381-394 (RHNSSSFYLPQVSD). Residues 397–411 (GLNGSVSTGGGGGGD) are compositionally biased toward gly residues. Residues 415 to 429 (HMRLYHPRHSPHARP) show a composition bias toward basic residues. Low complexity-rich tracts occupy residues 688-705 (QQQQQQQQAQQVVSSGIG) and 751-765 (QQQQQQQQAAAAAAA). Positions 768-780 (HRSNPTSPTTMPQ) are enriched in polar residues. The span at 910-919 (MQSNASNSGT) shows a compositional bias: polar residues.

Belongs to the DHHC palmitoyltransferase family. ERF2/ZDHHC9 subfamily.

It localises to the golgi apparatus membrane. It is found in the cell membrane. The catalysed reaction is L-cysteinyl-[protein] + hexadecanoyl-CoA = S-hexadecanoyl-L-cysteinyl-[protein] + CoA. Its function is as follows. Palmitoyltransferase that catalyzes the addition of palmitate onto various protein substrates and therefore functions in several unrelated biological processes. Regulates tissue growth possibly by regulating Ras64B protein stability. May regulate CG34450 mRNA levels. This Drosophila melanogaster (Fruit fly) protein is Palmitoyltransferase ZDHHC8.